Reading from the N-terminus, the 823-residue chain is ATP-dependent DNA helicase At3g02060, chloroplastic (823 aa).

The transit peptide at 1–53 (MMSLLPNPDPITVPLVLKLCSFPPPRRLFSLRLRRFTRKSSSLLPLVAVSSLS) directs the protein to the chloroplast. The Helicase ATP-binding domain occupies 285 to 447 (LTERETPMDR…LTGFRDASLI (163 aa)). 298–305 (GDVGFGKT) contributes to the ATP binding site. A DEEQ box motif is present at residues 400 to 403 (DEEQ). Residues 465–622 (RKEKVIEAIK…GFQLAEKDMG (158 aa)) enclose the Helicase C-terminal domain.

It belongs to the helicase family.

The protein localises to the plastid. Its subcellular location is the chloroplast. The catalysed reaction is ATP + H2O = ADP + phosphate + H(+). This Arabidopsis thaliana (Mouse-ear cress) protein is ATP-dependent DNA helicase At3g02060, chloroplastic.